A 498-amino-acid polypeptide reads, in one-letter code: ATP synthase subunit beta, chloroplastic (498 aa).

172-179 (GGAGVGKT) is a binding site for ATP.

Belongs to the ATPase alpha/beta chains family. F-type ATPases have 2 components, CF(1) - the catalytic core - and CF(0) - the membrane proton channel. CF(1) has five subunits: alpha(3), beta(3), gamma(1), delta(1), epsilon(1). CF(0) has four main subunits: a(1), b(1), b'(1) and c(9-12).

The protein localises to the plastid. The protein resides in the chloroplast thylakoid membrane. It catalyses the reaction ATP + H2O + 4 H(+)(in) = ADP + phosphate + 5 H(+)(out). In terms of biological role, produces ATP from ADP in the presence of a proton gradient across the membrane. The catalytic sites are hosted primarily by the beta subunits. The sequence is that of ATP synthase subunit beta, chloroplastic from Canella winterana (Wild cinnamon).